The chain runs to 199 residues: GTP cyclohydrolase 1 (199 aa).

Zn(2+)-binding residues include cysteine 89, histidine 92, and cysteine 161.

Belongs to the GTP cyclohydrolase I family. In terms of assembly, toroid-shaped homodecamer, composed of two pentamers of five dimers.

It carries out the reaction GTP + H2O = 7,8-dihydroneopterin 3'-triphosphate + formate + H(+). It functions in the pathway cofactor biosynthesis; 7,8-dihydroneopterin triphosphate biosynthesis; 7,8-dihydroneopterin triphosphate from GTP: step 1/1. This is GTP cyclohydrolase 1 from Bifidobacterium longum (strain NCC 2705).